The primary structure comprises 327 residues: Phage tubulin-like protein (327 aa).

Residues 14 to 15 (GA) and 107 to 109 (ASG) contribute to the GTP site. The segment at 303-327 (KANMRKRQSTLDVDDQATSSGLVFD) is disordered. Over residues 318-327 (QATSSGLVFD) the composition is skewed to polar residues.

Belongs to the FtsZ family. PhuZ subfamily. In terms of assembly, homomultimer. Polymerizes in a strictly GTP-dependent manner.

The protein resides in the host cytoplasm. The catalysed reaction is GTP + H2O = GDP + phosphate + H(+). With respect to regulation, the non-hydrolyzable GTP analog GMPCPP stabilizes filaments, which never disassemble. Functionally, a tubulin-like GTPase that forms filaments, which are required for positioning viral DNA and capsids in the middle of the host cell for optimal replication. The motor component of a partition system which pushes phage DNA (encased by protein gp105) to the center of the bacterial host cell. Also required for movement of phage capsids to the vicinity of the viral DNA and rotation of the encased viral DNA at midcell. Forms filaments during the lytic phase, which position phage DNA at the center of the bacterial host cell. Filaments have a three-stranded intertwined architecture and form a spindle-like cytoskeleton within the infected cell. Has GTPase activity. Filaments grow at the plus end and depolymerize at the minus end, a process called treadmilling, and switch from growing in a polar manner to catastrophic depolymerization, i.e. they display dynamic instability, like tubulin. In infected host cells the filament ends close to the cell pole are relatively stable, while the other end near the phage DNA is highly dynamic. Both capsid movement and DNA rotation probably require treadmilling. The protein is Phage tubulin-like protein of Pseudomonas phage phiKZ.